Here is a 506-residue protein sequence, read N- to C-terminus: Histidine ammonia-lyase (506 aa).

The 5-imidazolinone (Ala-Gly) cross-link spans 143 to 145 (ASG). Serine 144 bears the 2,3-didehydroalanine (Ser) mark.

This sequence belongs to the PAL/histidase family. Post-translationally, contains an active site 4-methylidene-imidazol-5-one (MIO), which is formed autocatalytically by cyclization and dehydration of residues Ala-Ser-Gly.

The protein resides in the cytoplasm. The enzyme catalyses L-histidine = trans-urocanate + NH4(+). The protein operates within amino-acid degradation; L-histidine degradation into L-glutamate; N-formimidoyl-L-glutamate from L-histidine: step 1/3. The chain is Histidine ammonia-lyase from Salmonella paratyphi B (strain ATCC BAA-1250 / SPB7).